A 118-amino-acid chain; its full sequence is Ribonuclease P protein component (118 aa).

It belongs to the RnpA family. In terms of assembly, consists of a catalytic RNA component (M1 or rnpB) and a protein subunit.

It carries out the reaction Endonucleolytic cleavage of RNA, removing 5'-extranucleotides from tRNA precursor.. Functionally, RNaseP catalyzes the removal of the 5'-leader sequence from pre-tRNA to produce the mature 5'-terminus. It can also cleave other RNA substrates such as 4.5S RNA. The protein component plays an auxiliary but essential role in vivo by binding to the 5'-leader sequence and broadening the substrate specificity of the ribozyme. The chain is Ribonuclease P protein component from Shewanella oneidensis (strain ATCC 700550 / JCM 31522 / CIP 106686 / LMG 19005 / NCIMB 14063 / MR-1).